The chain runs to 258 residues: Hydroxyacylglutathione hydrolase (258 aa).

Zn(2+) is bound by residues H56, H58, D60, H61, H112, D132, and H170.

It belongs to the metallo-beta-lactamase superfamily. Glyoxalase II family. In terms of assembly, monomer. Requires Zn(2+) as cofactor.

It catalyses the reaction an S-(2-hydroxyacyl)glutathione + H2O = a 2-hydroxy carboxylate + glutathione + H(+). The protein operates within secondary metabolite metabolism; methylglyoxal degradation; (R)-lactate from methylglyoxal: step 2/2. In terms of biological role, thiolesterase that catalyzes the hydrolysis of S-D-lactoyl-glutathione to form glutathione and D-lactic acid. The sequence is that of Hydroxyacylglutathione hydrolase from Pseudomonas aeruginosa (strain LESB58).